A 262-amino-acid chain; its full sequence is Polyamine aminopropyltransferase (262 aa).

One can recognise a PABS domain in the interval 1 to 249 (MWITQEITPY…DIHRAAFALP (249 aa)). Asn29 lines the S-methyl-5'-thioadenosine pocket. Asp83 lines the spermidine pocket. The Proton acceptor role is filled by Asp155.

This sequence belongs to the spermidine/spermine synthase family. As to quaternary structure, homodimer or homotetramer.

The protein resides in the cytoplasm. It carries out the reaction S-adenosyl 3-(methylsulfanyl)propylamine + putrescine = S-methyl-5'-thioadenosine + spermidine + H(+). Its pathway is amine and polyamine biosynthesis; spermidine biosynthesis; spermidine from putrescine: step 1/1. Catalyzes the irreversible transfer of a propylamine group from the amino donor S-adenosylmethioninamine (decarboxy-AdoMet) to putrescine (1,4-diaminobutane) to yield spermidine. In Helicobacter pylori (strain P12), this protein is Polyamine aminopropyltransferase.